A 327-amino-acid chain; its full sequence is Zinc transport protein ZntB (327 aa).

Over 1 to 273 (MEAIKGSDVN…ARRTYTMSLM (273 aa)) the chain is Cytoplasmic. A helical membrane pass occupies residues 274–294 (AMVFLPSTFLTGLFGVNLGGI). Topologically, residues 295-300 (PGGGWQ) are periplasmic. The chain crosses the membrane as a helical span at residues 301-321 (FGFSIFCILLVVLIGGVALWL). Residues 322–327 (HRSKWL) are Cytoplasmic-facing.

This sequence belongs to the CorA metal ion transporter (MIT) (TC 1.A.35) family.

The protein localises to the cell inner membrane. It carries out the reaction Zn(2+)(out) + H(+)(out) = Zn(2+)(in) + H(+)(in). Functionally, zinc transporter. Acts as a Zn(2+):proton symporter, which likely mediates zinc ion uptake. The protein is Zinc transport protein ZntB of Escherichia coli O139:H28 (strain E24377A / ETEC).